Reading from the N-terminus, the 256-residue chain is V-type proton ATPase subunit D (256 aa).

Residues 211–230 (QNETAKLDAEMKLKRDRAEQ) are compositionally biased toward basic and acidic residues. A disordered region spans residues 211-256 (QNETAKLDAEMKLKRDRAEQDASEVAADEEPQGETLVADQEDDVIF).

The protein belongs to the V-ATPase D subunit family. In terms of assembly, V-ATPase is a heteromultimeric enzyme composed of a peripheral catalytic V1 complex (components A to H) attached to an integral membrane V0 proton pore complex (components: a, c, c', c'', d, e, f and VOA1). Interacts with RAV1 and RAV2 components of the RAVE complex, which are essential for the stability and assembly of V-ATPase.

It is found in the vacuole membrane. In terms of biological role, subunit of the V1 complex of vacuolar(H+)-ATPase (V-ATPase), a multisubunit enzyme composed of a peripheral complex (V1) that hydrolyzes ATP and a membrane integral complex (V0) that translocates protons. V-ATPase is responsible for acidifying and maintaining the pH of intracellular compartments. In Saccharomyces cerevisiae (strain ATCC 204508 / S288c) (Baker's yeast), this protein is V-type proton ATPase subunit D.